A 260-amino-acid polypeptide reads, in one-letter code: Zinc import ATP-binding protein ZnuC (260 aa).

One can recognise an ABC transporter domain in the interval 18 to 234 (IRLQEVAVTF…PEYQKLFGSH (217 aa)). Position 50-57 (50-57 (GNNGAGKT)) interacts with ATP. Positions 241-260 (VFPHDHHDHSGPALAGGGRG) are disordered.

Belongs to the ABC transporter superfamily. Zinc importer (TC 3.A.1.15.5) family. The complex is composed of two ATP-binding proteins (ZnuC), two transmembrane proteins (ZnuB) and a solute-binding protein (ZnuA).

It is found in the cell inner membrane. The enzyme catalyses Zn(2+)(out) + ATP(in) + H2O(in) = Zn(2+)(in) + ADP(in) + phosphate(in) + H(+)(in). Its function is as follows. Part of the ABC transporter complex ZnuABC involved in zinc import. Responsible for energy coupling to the transport system. The chain is Zinc import ATP-binding protein ZnuC from Halorhodospira halophila (strain DSM 244 / SL1) (Ectothiorhodospira halophila (strain DSM 244 / SL1)).